A 264-amino-acid chain; its full sequence is Apolipoprotein A-I (264 aa).

Residues methionine 1–alanine 18 form the signal peptide. A run of 2 repeats spans residues leucine 67–glycine 88 and proline 89–asparagine 110. The 10 X approximate tandem repeats stretch occupies residues leucine 67–glutamine 264. Methionine 109 carries the methionine sulfoxide modification. A 3; half-length repeat occupies lysine 111–glutamine 121. 5 consecutive repeat copies span residues proline 122–glutamate 143, proline 144–threonine 165, proline 166–threonine 187, proline 188–serine 207, and proline 208–lysine 229. Methionine 193 is subject to Methionine sulfoxide. Residues proline 230–methionine 240 form a 9; half-length repeat. The residue at position 240 (methionine 240) is a Methionine sulfoxide. Copy 10 of the repeat occupies proline 241–glutamine 264.

It belongs to the apolipoprotein A1/A4/E family. As to quaternary structure, homodimer. Interacts with APOA1BP and CLU. Component of a sperm activating protein complex (SPAP), consisting of APOA1, an immunoglobulin heavy chain, an immunoglobulin light chain and albumin. Interacts with NDRG1. Interacts with SCGB3A2. Interacts with NAXE and YJEFN3. In terms of processing, glycosylated. Post-translationally, palmitoylated. Phosphorylation sites are present in the extracellular medium. As to expression, major protein of plasma HDL, also found in chylomicrons.

It localises to the secreted. Participates in the reverse transport of cholesterol from tissues to the liver for excretion by promoting cholesterol efflux from tissues and by acting as a cofactor for the lecithin cholesterol acyltransferase (LCAT). As part of the SPAP complex, activates spermatozoa motility. The chain is Apolipoprotein A-I (APOAI) from Mesocricetus auratus (Golden hamster).